The primary structure comprises 150 residues: Actin-depolymerizing factor 3 (150 aa).

An ADF-H domain is found at Gly7–Ser150.

The protein belongs to the actin-binding proteins ADF family.

In terms of biological role, actin-depolymerizing protein. Severs actin filaments (F-actin) and binds to actin monomers. The polypeptide is Actin-depolymerizing factor 3 (ADF3) (Oryza sativa subsp. japonica (Rice)).